The sequence spans 457 residues: Argininosuccinate lyase (457 aa).

It belongs to the lyase 1 family. Argininosuccinate lyase subfamily.

It localises to the cytoplasm. The enzyme catalyses 2-(N(omega)-L-arginino)succinate = fumarate + L-arginine. Its pathway is amino-acid biosynthesis; L-arginine biosynthesis; L-arginine from L-ornithine and carbamoyl phosphate: step 3/3. In Staphylococcus carnosus (strain TM300), this protein is Argininosuccinate lyase.